Here is a 309-residue protein sequence, read N- to C-terminus: Ornithine carbamoyltransferase (309 aa).

Residues 52-55 (STRT), Gln79, Arg103, and 130-133 (HPCQ) contribute to the carbamoyl phosphate site. L-ornithine contacts are provided by residues Asn161, Asp221, and 225–226 (SM). Carbamoyl phosphate-binding positions include 261–262 (CL) and Arg289.

Belongs to the aspartate/ornithine carbamoyltransferase superfamily. OTCase family.

The protein localises to the cytoplasm. The enzyme catalyses carbamoyl phosphate + L-ornithine = L-citrulline + phosphate + H(+). It participates in amino-acid biosynthesis; L-arginine biosynthesis; L-arginine from L-ornithine and carbamoyl phosphate: step 1/3. Reversibly catalyzes the transfer of the carbamoyl group from carbamoyl phosphate (CP) to the N(epsilon) atom of ornithine (ORN) to produce L-citrulline. The polypeptide is Ornithine carbamoyltransferase (Methanoculleus marisnigri (strain ATCC 35101 / DSM 1498 / JR1)).